The following is a 606-amino-acid chain: Aspartate--tRNA(Asp/Asn) ligase (606 aa).

Position 172 (Glu172) interacts with L-aspartate. The interval 196-199 (QLFK) is aspartate. Arg218 provides a ligand contact to L-aspartate. Residues 218–220 (RDE) and Gln227 contribute to the ATP site. His448 serves as a coordination point for L-aspartate. ATP is bound at residue Glu482. Arg489 is an L-aspartate binding site. Residue 534–537 (GWDR) participates in ATP binding.

It belongs to the class-II aminoacyl-tRNA synthetase family. Type 1 subfamily. In terms of assembly, homodimer.

Its subcellular location is the cytoplasm. It catalyses the reaction tRNA(Asx) + L-aspartate + ATP = L-aspartyl-tRNA(Asx) + AMP + diphosphate. In terms of biological role, aspartyl-tRNA synthetase with relaxed tRNA specificity since it is able to aspartylate not only its cognate tRNA(Asp) but also tRNA(Asn). Reaction proceeds in two steps: L-aspartate is first activated by ATP to form Asp-AMP and then transferred to the acceptor end of tRNA(Asp/Asn). This is Aspartate--tRNA(Asp/Asn) ligase from Saccharopolyspora erythraea (strain ATCC 11635 / DSM 40517 / JCM 4748 / NBRC 13426 / NCIMB 8594 / NRRL 2338).